The primary structure comprises 299 residues: Probable tyrosine phosphatase protein J4 (299 aa).

The 274-residue stretch at 16 to 289 (VEALDFLSFM…VYCYQALYVW (274 aa)) folds into the Tyrosine-protein phosphatase domain. Catalysis depends on C230, which acts as the Phosphocysteine intermediate.

This sequence belongs to the protein-tyrosine phosphatase family.

The catalysed reaction is O-phospho-L-tyrosyl-[protein] + H2O = L-tyrosyl-[protein] + phosphate. This is Probable tyrosine phosphatase protein J4 (J5) from Microplitis demolitor bracovirus (isolate Webb) (MdBV).